The primary structure comprises 202 residues: Large ribosomal subunit protein uL4 (202 aa).

The interval 40–71 is disordered; sequence GRQGSKAQKTRSQVSGGGKKPWRQKGSGRARA. Polar residues predominate over residues 44–53; the sequence is SKAQKTRSQV.

It belongs to the universal ribosomal protein uL4 family. In terms of assembly, part of the 50S ribosomal subunit.

Its function is as follows. One of the primary rRNA binding proteins, this protein initially binds near the 5'-end of the 23S rRNA. It is important during the early stages of 50S assembly. It makes multiple contacts with different domains of the 23S rRNA in the assembled 50S subunit and ribosome. Functionally, forms part of the polypeptide exit tunnel. The sequence is that of Large ribosomal subunit protein uL4 from Hahella chejuensis (strain KCTC 2396).